The sequence spans 225 residues: MAGESFEWWRRTMQYQTGLGLTADEKARYEKDYAVYNREKQCKSCYEYRDWMLKYSPTVRFMIQQISKLNGNASDGKVLNFDESKIICDECPDWKSGGFHPEIGILLCQNRLKDKWHLEDTLSHELVHYFDNLKWQIDWLNLKQHACSEIRASALSGECRFSREFARLGFSMNFGRGHQDCAKRRAIISVMGNPNCKDKEHATKVVEEVWDSCFYDTRPFEEIYR.

Residue His124 participates in a divalent metal cation binding. Residue Glu125 is part of the active site. Residue His128 coordinates a divalent metal cation.

The protein belongs to the peptidase M76 family.

The protein resides in the mitochondrion inner membrane. Its function is as follows. Has a dual role in the assembly of mitochondrial ATPase. Acts as a protease that removes N-terminal residues of mitochondrial ATPase CF(0) subunit 6 at the intermembrane space side. Also involved in the correct assembly of the membrane-embedded ATPase CF(0) particle, probably mediating association of subunit 6 with the subunit 9 ring. This Candida glabrata (strain ATCC 2001 / BCRC 20586 / JCM 3761 / NBRC 0622 / NRRL Y-65 / CBS 138) (Yeast) protein is Mitochondrial inner membrane protease ATP23 (ATP23).